We begin with the raw amino-acid sequence, 392 residues long: Multidrug resistance protein MdtL (392 aa).

12 consecutive transmembrane segments (helical) span residues 4-24 (FLLC…MYLV), 38-58 (AQLH…MLFA), 69-89 (PVAI…AQVH), 95-115 (LIGR…AFAI), 131-151 (LLNG…HLIM), 158-178 (SLFY…VFIL), 209-229 (LLIT…SPVL), 246-266 (ALMA…LSLF), 270-290 (TLML…SLAT), 294-314 (VTLI…GVAM), 331-351 (VLGI…AIIG), and 357-377 (MLIG…LVVT).

The protein belongs to the major facilitator superfamily. DHA1 family. MdtL (TC 2.A.1.2.22) subfamily.

Its subcellular location is the cell inner membrane. This is Multidrug resistance protein MdtL from Klebsiella pneumoniae subsp. pneumoniae (strain ATCC 700721 / MGH 78578).